Consider the following 452-residue polypeptide: GTPase Obg (452 aa).

An Obg domain is found at Met-1–Met-158. Disordered stretches follow at residues Gly-66 to Ile-87 and Ala-117 to Gly-143. Residues Ala-159–Ala-338 enclose the OBG-type G domain. GTP is bound by residues Gly-165 to Ser-172, Phe-190 to Asn-194, Asp-212 to Gly-215, Asn-282 to Asp-285, and Ser-319 to Ala-321. Residues Ser-172 and Thr-192 each coordinate Mg(2+). The OCT domain occupies Ile-376–Gln-452.

This sequence belongs to the TRAFAC class OBG-HflX-like GTPase superfamily. OBG GTPase family. As to quaternary structure, monomer. Requires Mg(2+) as cofactor.

The protein localises to the cytoplasm. Its function is as follows. An essential GTPase which binds GTP, GDP and possibly (p)ppGpp with moderate affinity, with high nucleotide exchange rates and a fairly low GTP hydrolysis rate. Plays a role in control of the cell cycle, stress response, ribosome biogenesis and in those bacteria that undergo differentiation, in morphogenesis control. In Natranaerobius thermophilus (strain ATCC BAA-1301 / DSM 18059 / JW/NM-WN-LF), this protein is GTPase Obg.